A 690-amino-acid polypeptide reads, in one-letter code: UvrABC system protein C (690 aa).

The interval 1-60 is disordered; it reads MTTDSSDPAKPAGPGQPPGSGADTRPGGLATGQDVDPATIETDEDDEARLPDVPDEPTDA. Over residues 41-58 the composition is skewed to acidic residues; the sequence is ETDEDDEARLPDVPDEPT. The GIY-YIG domain occupies 82-160; it reads TSPGVYRMMN…IKQLRPRFNV (79 aa). Positions 270-305 constitute a UVR domain; that stretch reads RAVKEELAREMEKASGDLAFERAALYRDRLAALSAI.

The protein belongs to the UvrC family. As to quaternary structure, interacts with UvrB in an incision complex.

It localises to the cytoplasm. In terms of biological role, the UvrABC repair system catalyzes the recognition and processing of DNA lesions. UvrC both incises the 5' and 3' sides of the lesion. The N-terminal half is responsible for the 3' incision and the C-terminal half is responsible for the 5' incision. The protein is UvrABC system protein C of Nitrobacter hamburgensis (strain DSM 10229 / NCIMB 13809 / X14).